The sequence spans 210 residues: Uracil phosphoribosyltransferase (210 aa).

Residues Arg-80, Arg-105, and 132 to 140 (DPMLATGGS) contribute to the 5-phospho-alpha-D-ribose 1-diphosphate site. Residues Ile-195 and 200–202 (GDA) each bind uracil. 5-phospho-alpha-D-ribose 1-diphosphate is bound at residue Asp-201.

It belongs to the UPRTase family. Requires Mg(2+) as cofactor.

The catalysed reaction is UMP + diphosphate = 5-phospho-alpha-D-ribose 1-diphosphate + uracil. The protein operates within pyrimidine metabolism; UMP biosynthesis via salvage pathway; UMP from uracil: step 1/1. Allosterically activated by GTP. Its function is as follows. Catalyzes the conversion of uracil and 5-phospho-alpha-D-ribose 1-diphosphate (PRPP) to UMP and diphosphate. The sequence is that of Uracil phosphoribosyltransferase from Thermoanaerobacter pseudethanolicus (strain ATCC 33223 / 39E) (Clostridium thermohydrosulfuricum).